The sequence spans 484 residues: Protein arginine methyltransferase NDUFAF7 homolog, mitochondrial (484 aa).

Residues 1 to 12 (MFRSITQRVIRN) constitute a mitochondrion transit peptide.

This sequence belongs to the NDUFAF7 family. As to quaternary structure, homodimer. Interacts with ndufs2.

It localises to the mitochondrion. It catalyses the reaction L-arginyl-[protein] + 2 S-adenosyl-L-methionine = N(omega),N(omega)'-dimethyl-L-arginyl-[protein] + 2 S-adenosyl-L-homocysteine + 2 H(+). In terms of biological role, involved in the assembly or stability of mitochondrial NADH:ubiquinone oxidoreductase complex (complex I). Acts as an arginine methyltransferase and probably acts by mediating arginine methylation of ndufs2. This Dictyostelium discoideum (Social amoeba) protein is Protein arginine methyltransferase NDUFAF7 homolog, mitochondrial.